We begin with the raw amino-acid sequence, 35 residues long: Mu-theraphotoxin-Pm1a (35 aa).

3 cysteine pairs are disulfide-bonded: cysteine 3–cysteine 17, cysteine 10–cysteine 22, and cysteine 16–cysteine 29. Phenylalanine 35 is subject to Phenylalanine amide.

The protein belongs to the neurotoxin 10 (Hwtx-1) family. 62 (Vatx) subfamily. As to expression, expressed by the venom gland.

The protein localises to the secreted. Gating-modifier toxin with weak activity on Nav1.7/SCN9A and Nav1.8/SCN10A. Inhibits Nav1.7/SCN9A peak current (IC(50)=334 nM) and shifts the voltage dependence of activation to more depolarised membrane potentials. Shows 21% peak current inhibition (at 10 uM) on Nav1.8/SCN10A sodium channels. This chain is Mu-theraphotoxin-Pm1a, found in Poecilotheria metallica (Metallic blue ornamental tree spider).